We begin with the raw amino-acid sequence, 263 residues long: Small ribosomal subunit protein uS2 (263 aa).

The segment covering 230 to 249 (GEALVNEEKEITDEEKKEVL) has biased composition (basic and acidic residues). The tract at residues 230-263 (GEALVNEEKEITDEEKKEVLDEAMSEEDFGEEQE) is disordered. Positions 250-263 (DEAMSEEDFGEEQE) are enriched in acidic residues.

It belongs to the universal ribosomal protein uS2 family.

The polypeptide is Small ribosomal subunit protein uS2 (Campylobacter jejuni subsp. jejuni serotype O:2 (strain ATCC 700819 / NCTC 11168)).